The sequence spans 1079 residues: Electrogenic sodium bicarbonate cotransporter 1 (1079 aa).

A required for interaction with AHCYL1 region spans residues 1-62; the sequence is MEDEAALDRG…EKKEKERVSE (62 aa). Over 1-466 the chain is Cytoplasmic; the sequence is MEDEAALDRG…FASDFYDALN (466 aa). Tyr-30 carries the phosphotyrosine modification. Positions 39-52 are enriched in basic residues; that stretch reads YRRRRRHKRKAGHR. A disordered region spans residues 39–78; it reads YRRRRRHKRKAGHREKKEKERVSENYSDKSDVENADESSS. Residues 53–70 are compositionally biased toward basic and acidic residues; that stretch reads EKKEKERVSENYSDKSDV. A phosphoserine mark is found at Ser-61, Ser-65, Ser-68, Ser-223, Ser-232, Ser-233, and Ser-245. Residues 238-265 form a disordered region; it reads FTSPENGSPAMTHRNLTSSSLNDISDKP. Thr-249 and Thr-254 each carry phosphothreonine. Over residues 251 to 260 the composition is skewed to polar residues; that stretch reads RNLTSSSLND. Residues Ser-256, Ser-257, and Ser-262 each carry the phosphoserine modification. The helical transmembrane segment at 467–491 threads the bilayer; sequence IQALSAILFIYLATVTNAITFGGLL. The Extracellular portion of the chain corresponds to 492–501; it reads GDATDNMQGV. Residues 502 to 520 traverse the membrane as a helical segment; the sequence is LESFLGTAVSGAVFCLFAG. Position 521 (Gln-521) is a topological domain, cytoplasmic. A discontinuously helical transmembrane segment spans residues 522-542; that stretch reads PLTILSSTGPVLVFERLLFNF. Topologically, residues 543–550 are extracellular; sequence SKDHNFDY. The chain crosses the membrane as a helical span at residues 551–571; it reads LEFRLWIGLWSAFLCLILVAT. Topologically, residues 572–585 are cytoplasmic; that stretch reads DASFLVQYFTRFTE. A helical transmembrane segment spans residues 586–609; the sequence is EGFSSLISFIFIYDAFKKMIKLAD. Residues 610 to 692 are Extracellular-facing; it reads YYPINSNFKV…GNNCDFVPDI (83 aa). A helical transmembrane segment spans residues 693 to 710; that stretch reads TLMSFILFLGTYTSSMAL. The Cytoplasmic segment spans residues 711-725; sequence KKFKTSRYFPTTARK. The chain crosses the membrane as a helical span at residues 726 to 745; that stretch reads LISDFAIILSILIFCVIDAL. Over 746 to 779 the chain is Extracellular; sequence VGVDTPKLIVPSEFKPTSPNRGWFVPPFGGNPWW. Residues 748–779 form an interaction with CA4 region; it reads VDTPKLIVPSEFKPTSPNRGWFVPPFGGNPWW. The helical transmembrane segment at 780 to 807 threads the bilayer; sequence VYLAAAIPALLVTILIFMDQQITAVIVN. Residues 808–819 lie on the Cytoplasmic side of the membrane; that stretch reads RKEHKLKKGAGY. The chain crosses the membrane as a helical span at residues 820 to 836; that stretch reads HLDLFWVAILMVVCSFM. Ala-837 is a topological domain (extracellular). A discontinuously helical membrane pass occupies residues 838–855; sequence LPWYVAATVISIAHIDSL. The Cytoplasmic portion of the chain corresponds to 856 to 877; that stretch reads KMETETSAPGEQPKFLGVREQR. The helical transmembrane segment at 878-894 threads the bilayer; it reads VTGTLVFILTGLSVFMA. Residues 895 to 901 lie on the Extracellular side of the membrane; sequence PILKFIP. The chain crosses the membrane as a helical span at residues 902–918; the sequence is MPVLYGVFLYMGVASLN. Topologically, residues 919-960 are cytoplasmic; the sequence is GVQFMDRLKLLLMPLKHQPDFIYLRHVPLRRVHLFTFLQVLC. The discontinuously helical intramembrane region spans 961 to 986; sequence LALLWILKSTVAAIIFPVMILALVAV. At 987–1079 the chain is on the cytoplasmic side; that stretch reads RKGMDYLFSQ…PTFLERHTSC (93 aa). Residues 1002–1004 form a CA2-binding region; it reads LDD. The disordered stretch occupies residues 1012-1079; it reads KKKEDEKKKK…PTFLERHTSC (68 aa). Phosphoserine; by PKA is present on Ser-1026. A Phosphoserine modification is found at Ser-1029. The CA2-binding stretch occupies residues 1030-1033; that stretch reads DSDD. Phosphoserine occurs at positions 1034 and 1044. Positions 1057–1059 are required for basolateral targeting; sequence FLS. Basic and acidic residues predominate over residues 1062-1079; it reads KPSDRERSPTFLERHTSC. At Ser-1069 the chain carries Phosphoserine.

It belongs to the anion exchanger (TC 2.A.31) family. Homodimer. Interacts with CA2/carbonic anhydrase 2 and CA4/carbonic anhydrase 4 which may regulate transporter activity. Isoform 1 but not isoform 2 interacts with AHCYL1 (via PEST domain when phosphorylated); the interaction increases SLC4A4 isoform 1 activity. Interacts with AHCYL2. Phosphorylation of Ser-1026 by PKA increases the binding of CA2 and changes the Na(+):HCO3(-) stoichiometry of the transporter from 3:1 to 2:1. Phosphorylated in presence of STK39 and dephosphorylated in presence of PP1 phosphatase; phosphorylation seems to inhibit SLC4A4 activity. In terms of processing, N-glycosylated. May not be necessary for the transporter basic functions. Expressed in vas deferens epithelia (at protein level).

The protein localises to the basolateral cell membrane. The protein resides in the cell membrane. The catalysed reaction is 2 hydrogencarbonate(out) + Na(+)(out) = 2 hydrogencarbonate(in) + Na(+)(in). The enzyme catalyses 3 hydrogencarbonate(out) + Na(+)(out) = 3 hydrogencarbonate(in) + Na(+)(in). Its function is as follows. Electrogenic sodium/bicarbonate cotransporter with a Na(+):HCO3(-) stoichiometry varying from 1:2 to 1:3. May regulate bicarbonate influx/efflux at the basolateral membrane of cells and regulate intracellular pH. The chain is Electrogenic sodium bicarbonate cotransporter 1 (SLC4A4) from Sus scrofa (Pig).